Consider the following 262-residue polypeptide: Ribosomal RNA small subunit methyltransferase A (262 aa).

6 residues coordinate S-adenosyl-L-methionine: His16, Leu18, Gly43, Glu64, Asp89, and Asn109.

Belongs to the class I-like SAM-binding methyltransferase superfamily. rRNA adenine N(6)-methyltransferase family. RsmA subfamily.

It localises to the cytoplasm. It carries out the reaction adenosine(1518)/adenosine(1519) in 16S rRNA + 4 S-adenosyl-L-methionine = N(6)-dimethyladenosine(1518)/N(6)-dimethyladenosine(1519) in 16S rRNA + 4 S-adenosyl-L-homocysteine + 4 H(+). Its function is as follows. Specifically dimethylates two adjacent adenosines (A1518 and A1519) in the loop of a conserved hairpin near the 3'-end of 16S rRNA in the 30S particle. May play a critical role in biogenesis of 30S subunits. The sequence is that of Ribosomal RNA small subunit methyltransferase A from Xanthomonas oryzae pv. oryzae (strain MAFF 311018).